A 21-amino-acid polypeptide reads, in one-letter code: Large ribosomal subunit protein uL10 (21 aa).

This sequence belongs to the universal ribosomal protein uL10 family. In terms of assembly, part of the ribosomal stalk of the 50S ribosomal subunit. The N-terminus interacts with L11 and the large rRNA to form the base of the stalk. The C-terminus forms an elongated spine to which L12 dimers bind in a sequential fashion forming a multimeric L10(L12)X complex.

Forms part of the ribosomal stalk, playing a central role in the interaction of the ribosome with GTP-bound translation factors. This chain is Large ribosomal subunit protein uL10 (rplJ), found in Bacillus cereus.